Reading from the N-terminus, the 125-residue chain is Ribosome-binding factor A (125 aa).

Belongs to the RbfA family. As to quaternary structure, monomer. Binds 30S ribosomal subunits, but not 50S ribosomal subunits or 70S ribosomes.

It localises to the cytoplasm. One of several proteins that assist in the late maturation steps of the functional core of the 30S ribosomal subunit. Associates with free 30S ribosomal subunits (but not with 30S subunits that are part of 70S ribosomes or polysomes). Required for efficient processing of 16S rRNA. May interact with the 5'-terminal helix region of 16S rRNA. The polypeptide is Ribosome-binding factor A (Wigglesworthia glossinidia brevipalpis).